The following is a 525-amino-acid chain: Chromosomal replication initiator protein DnaA (525 aa).

The segment at 1–71 (MNDFWQHCSA…SDLAREFWNT (71 aa)) is domain I, interacts with DnaA modulators. The domain II stretch occupies residues 71-188 (TPIEVQFVLD…GEADSMYERS (118 aa)). The tract at residues 162–182 (AGRRTWRPGPGAAPANGGEAD) is disordered. Residues 169 to 181 (PGPGAAPANGGEA) show a composition bias toward low complexity. Positions 189–405 (KLNPVLTFDN…GALRKILAYS (217 aa)) are domain III, AAA+ region. ATP contacts are provided by Gly233, Gly235, Lys236, and Thr237. The domain IV, binds dsDNA stretch occupies residues 406–525 (KFHGREISIE…LHVLEQTLKG (120 aa)).

This sequence belongs to the DnaA family. In terms of assembly, oligomerizes as a right-handed, spiral filament on DNA at oriC.

It localises to the cytoplasm. Plays an essential role in the initiation and regulation of chromosomal replication. ATP-DnaA binds to the origin of replication (oriC) to initiate formation of the DNA replication initiation complex once per cell cycle. Binds the DnaA box (a 9 base pair repeat at the origin) and separates the double-stranded (ds)DNA. Forms a right-handed helical filament on oriC DNA; dsDNA binds to the exterior of the filament while single-stranded (ss)DNA is stabiized in the filament's interior. The ATP-DnaA-oriC complex binds and stabilizes one strand of the AT-rich DNA unwinding element (DUE), permitting loading of DNA polymerase. After initiation quickly degrades to an ADP-DnaA complex that is not apt for DNA replication. Binds acidic phospholipids. The chain is Chromosomal replication initiator protein DnaA from Burkholderia cenocepacia (strain HI2424).